The following is a 498-amino-acid chain: Glycerol kinase (498 aa).

An ADP-binding site is contributed by threonine 14. 3 residues coordinate ATP: threonine 14, threonine 15, and serine 16. Residue threonine 14 participates in sn-glycerol 3-phosphate binding. Residue arginine 18 coordinates ADP. Residues arginine 84, glutamate 85, tyrosine 136, and aspartate 243 each coordinate sn-glycerol 3-phosphate. The glycerol site is built by arginine 84, glutamate 85, tyrosine 136, aspartate 243, and glutamine 244. Residues threonine 265 and glycine 308 each contribute to the ADP site. 4 residues coordinate ATP: threonine 265, glycine 308, glutamine 312, and glycine 409. Residues glycine 409 and asparagine 413 each contribute to the ADP site.

This sequence belongs to the FGGY kinase family.

It carries out the reaction glycerol + ATP = sn-glycerol 3-phosphate + ADP + H(+). It functions in the pathway polyol metabolism; glycerol degradation via glycerol kinase pathway; sn-glycerol 3-phosphate from glycerol: step 1/1. Inhibited by fructose 1,6-bisphosphate (FBP). In terms of biological role, key enzyme in the regulation of glycerol uptake and metabolism. Catalyzes the phosphorylation of glycerol to yield sn-glycerol 3-phosphate. The polypeptide is Glycerol kinase (Shewanella frigidimarina (strain NCIMB 400)).